The sequence spans 544 residues: Chaperonin GroEL (544 aa).

Residues 30–33, Lys51, 87–91, Gly415, and Asp495 contribute to the ATP site; these read TLGP and DGTTT.

This sequence belongs to the chaperonin (HSP60) family. As to quaternary structure, forms a cylinder of 14 subunits composed of two heptameric rings stacked back-to-back. Interacts with the co-chaperonin GroES.

It localises to the cytoplasm. It catalyses the reaction ATP + H2O + a folded polypeptide = ADP + phosphate + an unfolded polypeptide.. Together with its co-chaperonin GroES, plays an essential role in assisting protein folding. The GroEL-GroES system forms a nano-cage that allows encapsulation of the non-native substrate proteins and provides a physical environment optimized to promote and accelerate protein folding. The chain is Chaperonin GroEL from Aeromonas salmonicida (strain A449).